We begin with the raw amino-acid sequence, 1082 residues long: Importin-4 (1082 aa).

Met1 carries the N-acetylmethionine modification. In terms of domain architecture, Importin N-terminal spans 24–90; sequence ATEQLQTILR…KSLVLTALQK (67 aa). 6 HEAT repeats span residues 348–385, 390–427, 431–471, 475–513, 896–933, and 937–975; these read KLCPHVMPMLEEALRSEDPYQRKAGFLVLAVLSDGAGD, RLLYPLLQIVCKGLDDPSQIVRNAALFALGQFSENLQP, SYSE…NLGP, PYLPELMECMLQPLKNPSKARTKELAVSAIGAIATAAQD, QFVSRLFPVLLNNAREADPEVRSNAIFGLGVLAEHGGC, and DHFPKLLGLLLPLLARERHDRVRDNICGALARVLMASPV.

This sequence belongs to the importin beta family. As to quaternary structure, found in a cytosolic complex with ASF1 (ASF1A or ASF1B) and histones H3 and H4.

It localises to the cytoplasm. The protein localises to the nucleus. Its function is as follows. Nuclear transport receptor that mediates nuclear import of proteins, such as histones, RPS3A, TNP2 and VDR. Serves as receptor for nuclear localization signals (NLS) in cargo substrates. Is thought to mediate docking of the importin/substrate complex to the nuclear pore complex (NPC) through binding to nucleoporin and the complex is subsequently translocated through the pore by an energy requiring, Ran-dependent mechanism. At the nucleoplasmic side of the NPC, Ran binds to the importin, the importin/substrate complex dissociates and importin is re-exported from the nucleus to the cytoplasm where GTP hydrolysis releases Ran. The directionality of nuclear import is thought to be conferred by an asymmetric distribution of the GTP- and GDP-bound forms of Ran between the cytoplasm and nucleus. Mediates the nuclear import of the histone H3-H4 dimer when in complex with ASF1 (ASF1A or ASF1B). Mediates the ligand-independent nuclear import of vitamin D receptor (VDR). This Mus musculus (Mouse) protein is Importin-4 (Ipo4).